A 473-amino-acid chain; its full sequence is Ribulose bisphosphate carboxylase large chain (473 aa).

Substrate is bound by residues Asn-116 and Thr-166. Catalysis depends on Lys-168, which acts as the Proton acceptor. Lys-170 is a binding site for substrate. Mg(2+) contacts are provided by Lys-194, Asp-196, and Glu-197. Lys-194 carries the post-translational modification N6-carboxylysine. His-287 functions as the Proton acceptor in the catalytic mechanism. Substrate is bound by residues Arg-288, His-320, and Ser-372.

Belongs to the RuBisCO large chain family. Type I subfamily. As to quaternary structure, heterohexadecamer of 8 large chains and 8 small chains. Mg(2+) serves as cofactor.

The catalysed reaction is 2 (2R)-3-phosphoglycerate + 2 H(+) = D-ribulose 1,5-bisphosphate + CO2 + H2O. The enzyme catalyses D-ribulose 1,5-bisphosphate + O2 = 2-phosphoglycolate + (2R)-3-phosphoglycerate + 2 H(+). Its function is as follows. RuBisCO catalyzes two reactions: the carboxylation of D-ribulose 1,5-bisphosphate, the primary event in carbon dioxide fixation, as well as the oxidative fragmentation of the pentose substrate. Both reactions occur simultaneously and in competition at the same active site. The polypeptide is Ribulose bisphosphate carboxylase large chain (Methylococcus capsulatus (strain ATCC 33009 / NCIMB 11132 / Bath)).